The following is a 403-amino-acid chain: cAMP-dependent protein kinase regulatory subunit (403 aa).

Positions 1 to 155 (MADYTIPSEL…RIQASIGNNF (155 aa)) are dimerization and phosphorylation. Positions 79–125 (YAYSTDDGFGTEDDDDDDDDEDDEAAIPPPVVNRGRRTSVSAESMAP) are disordered. The span at 87 to 103 (FGTEDDDDDDDDEDDEA) shows a compositional bias: acidic residues. Serine 117 carries the post-translational modification Phosphoserine. 3',5'-cyclic AMP-binding positions include 156 to 278 (LFRN…EEVP), glutamate 226, arginine 235, 279 to 403 (LLSS…PGEH), glutamate 349, and arginine 358.

This sequence belongs to the cAMP-dependent kinase regulatory chain family. As to quaternary structure, tetramer, composed of 2 regulatory (R) and 2 catalytic (C) subunits. In the presence of cAMP it dissociates into 2 active monomeric C subunits and an R dimer that binds four cAMP molecules.

In Blastocladiella emersonii (Aquatic fungus), this protein is cAMP-dependent protein kinase regulatory subunit (PKAR).